The sequence spans 696 residues: UvrABC system protein B (696 aa).

Residues glutamate 45–proline 434 form the Helicase ATP-binding domain. Glycine 58 to threonine 65 is an ATP binding site. Positions tyrosine 111–valine 134 match the Beta-hairpin motif. One can recognise a Helicase C-terminal domain in the interval glutamine 450 to isoleucine 616. In terms of domain architecture, UVR spans glycine 647 to glutamine 682.

This sequence belongs to the UvrB family. As to quaternary structure, forms a heterotetramer with UvrA during the search for lesions. Interacts with UvrC in an incision complex.

The protein resides in the cytoplasm. In terms of biological role, the UvrABC repair system catalyzes the recognition and processing of DNA lesions. A damage recognition complex composed of 2 UvrA and 2 UvrB subunits scans DNA for abnormalities. Upon binding of the UvrA(2)B(2) complex to a putative damaged site, the DNA wraps around one UvrB monomer. DNA wrap is dependent on ATP binding by UvrB and probably causes local melting of the DNA helix, facilitating insertion of UvrB beta-hairpin between the DNA strands. Then UvrB probes one DNA strand for the presence of a lesion. If a lesion is found the UvrA subunits dissociate and the UvrB-DNA preincision complex is formed. This complex is subsequently bound by UvrC and the second UvrB is released. If no lesion is found, the DNA wraps around the other UvrB subunit that will check the other stand for damage. The sequence is that of UvrABC system protein B from Ralstonia nicotianae (strain ATCC BAA-1114 / GMI1000) (Ralstonia solanacearum).